The chain runs to 301 residues: Acetylglutamate kinase (301 aa).

Substrate is bound by residues 72-73 (GG), Arg94, and Asn199.

Belongs to the acetylglutamate kinase family. ArgB subfamily.

It is found in the cytoplasm. The catalysed reaction is N-acetyl-L-glutamate + ATP = N-acetyl-L-glutamyl 5-phosphate + ADP. It participates in amino-acid biosynthesis; L-arginine biosynthesis; N(2)-acetyl-L-ornithine from L-glutamate: step 2/4. Catalyzes the ATP-dependent phosphorylation of N-acetyl-L-glutamate. In Bartonella henselae (strain ATCC 49882 / DSM 28221 / CCUG 30454 / Houston 1) (Rochalimaea henselae), this protein is Acetylglutamate kinase.